The chain runs to 482 residues: Probable glycine dehydrogenase (decarboxylating) subunit 2 (482 aa).

K267 is modified (N6-(pyridoxal phosphate)lysine).

This sequence belongs to the GcvP family. C-terminal subunit subfamily. In terms of assembly, the glycine cleavage system is composed of four proteins: P, T, L and H. In this organism, the P 'protein' is a heterodimer of two subunits. Pyridoxal 5'-phosphate is required as a cofactor.

The enzyme catalyses N(6)-[(R)-lipoyl]-L-lysyl-[glycine-cleavage complex H protein] + glycine + H(+) = N(6)-[(R)-S(8)-aminomethyldihydrolipoyl]-L-lysyl-[glycine-cleavage complex H protein] + CO2. Its function is as follows. The glycine cleavage system catalyzes the degradation of glycine. The P protein binds the alpha-amino group of glycine through its pyridoxal phosphate cofactor; CO(2) is released and the remaining methylamine moiety is then transferred to the lipoamide cofactor of the H protein. The protein is Probable glycine dehydrogenase (decarboxylating) subunit 2 of Aquifex aeolicus (strain VF5).